The primary structure comprises 248 residues: Exosome complex component Rrp41 (248 aa).

It belongs to the RNase PH family. Rrp41 subfamily. As to quaternary structure, component of the archaeal exosome complex. Forms a hexameric ring-like arrangement composed of 3 Rrp41-Rrp42 heterodimers. The hexameric ring associates with a trimer of Rrp4 and/or Csl4 subunits.

It localises to the cytoplasm. Functionally, catalytic component of the exosome, which is a complex involved in RNA degradation. Has 3'-&gt;5' exoribonuclease activity. Can also synthesize heteromeric RNA-tails. The chain is Exosome complex component Rrp41 from Thermoplasma acidophilum (strain ATCC 25905 / DSM 1728 / JCM 9062 / NBRC 15155 / AMRC-C165).